Reading from the N-terminus, the 85-residue chain is MPKLEMMLLVLLILPLCYIDAVGPPPPWNMEDEIIEHWQKLHCHEISDLTPWILCSPEPLCGGKGCCAQGVCDCSGPACTCPPCL.

The signal sequence occupies residues 1 to 21; it reads MPKLEMMLLVLLILPLCYIDA. Positions 22-40 are excised as a propeptide; sequence VGPPPPWNMEDEIIEHWQK.

The protein belongs to the conotoxin D superfamily. Post-translationally, contains 5 disulfide bonds. In terms of tissue distribution, expressed by the venom duct.

The protein localises to the secreted. Functionally, probable neurotoxin. This Conus litteratus (Lettered cone) protein is Conotoxin Lt28.5.